The sequence spans 215 residues: Fibroblast growth factor 17 (215 aa).

The signal sequence occupies residues 1 to 22 (MYGINQRYLYISFHFFVVWCHA). N-linked (GlcNAc...) asparagine glycosylation occurs at N137.

It belongs to the heparin-binding growth factors family.

The protein resides in the secreted. Involved in dorsal-ventral embryonic patterning, by promoting expression of bone morphogenetic protein (BMP) antagonists such as chd. Also involved in anterior-posterior neural patterning and in mesoderm induction. The polypeptide is Fibroblast growth factor 17 (fgf17) (Danio rerio (Zebrafish)).